The sequence spans 271 residues: 3-methyl-2-oxobutanoate hydroxymethyltransferase (271 aa).

The Mg(2+) site is built by D53 and D92. 3-methyl-2-oxobutanoate-binding positions include 53–54 (DS), D92, and K120. Residue E122 coordinates Mg(2+). Residue E189 is the Proton acceptor of the active site.

Belongs to the PanB family. As to quaternary structure, homodecamer; pentamer of dimers. Requires Mg(2+) as cofactor.

The protein resides in the cytoplasm. The enzyme catalyses 3-methyl-2-oxobutanoate + (6R)-5,10-methylene-5,6,7,8-tetrahydrofolate + H2O = 2-dehydropantoate + (6S)-5,6,7,8-tetrahydrofolate. It functions in the pathway cofactor biosynthesis; (R)-pantothenate biosynthesis; (R)-pantoate from 3-methyl-2-oxobutanoate: step 1/2. Catalyzes the reversible reaction in which hydroxymethyl group from 5,10-methylenetetrahydrofolate is transferred onto alpha-ketoisovalerate to form ketopantoate. The sequence is that of 3-methyl-2-oxobutanoate hydroxymethyltransferase from Paraburkholderia phymatum (strain DSM 17167 / CIP 108236 / LMG 21445 / STM815) (Burkholderia phymatum).